Consider the following 575-residue polypeptide: Urease subunit alpha (575 aa).

Residues 138–575 form the Urease domain; it reads GAVDCHVHLI…LPMTQRYFLF (438 aa). His-143, His-145, and Lys-226 together coordinate Ni(2+). Lys-226 carries the N6-carboxylysine modification. His-228 contributes to the substrate binding site. Ni(2+) is bound by residues His-255 and His-281. Catalysis depends on His-329, which acts as the Proton donor. Asp-369 contributes to the Ni(2+) binding site.

It belongs to the metallo-dependent hydrolases superfamily. Urease alpha subunit family. In terms of assembly, heterotrimer of UreA (gamma), UreB (beta) and UreC (alpha) subunits. Three heterotrimers associate to form the active enzyme. Ni cation serves as cofactor. In terms of processing, carboxylation allows a single lysine to coordinate two nickel ions.

The protein resides in the cytoplasm. The enzyme catalyses urea + 2 H2O + H(+) = hydrogencarbonate + 2 NH4(+). Its pathway is nitrogen metabolism; urea degradation; CO(2) and NH(3) from urea (urease route): step 1/1. The sequence is that of Urease subunit alpha from Frankia casuarinae (strain DSM 45818 / CECT 9043 / HFP020203 / CcI3).